Consider the following 363-residue polypeptide: Zinc finger protein 830 (363 aa).

N-acetylalanine is present on Ala-2. The stretch at 16–40 (VNQEELRRLMREKQRLSTNRKRIES) forms a coiled coil. The C2H2-type zinc-finger motif lies at 53–75 (CALCNTPVKSELLWQTHVLGKQH). Residues 81–213 (ELKGAKGATQ…NPPKAPLVPH (133 aa)) are disordered. Residues 90–99 (QGPSTGTVPQ) show a composition bias toward polar residues. The segment covering 104–115 (RATDVESQDAKK) has biased composition (basic and acidic residues). A compositionally biased stretch (low complexity) spans 129 to 143 (SASSANLDAARAAPS). Acidic residues predominate over residues 152–164 (DYDDEEEEEEEGG). A compositionally biased stretch (basic and acidic residues) spans 165-184 (GEERRDSSKHLPDAQGKEHS). Residues 189–205 (RETTSNVLPNDPFNTNP) are compositionally biased toward polar residues. Ser-216 carries the post-translational modification Phosphoserine. A coiled-coil region spans residues 303-331 (IECYRRVEKLRNRQDEIKNKLKEVLTIKE). Residues Ser-342 and Ser-353 each carry the phosphoserine modification.

Component of the XAB2 complex, a multimeric protein complex composed of XAB2, PRPF19, AQR, ZNF830, ISY1, and PPIE; this complex binds preferentially to RNA. Interacts with XAB2. Identified in a pentameric intron-binding (IB) complex composed of AQR, XAB2, ISY1, ZNF830 and PPIE that is incorporated into the spliceosome as a preassembled complex. The IB complex does not contain PRPF19. Phosphorylated in response to DNA damage by the cell cycle checkpoint kinases ATR/ATM. In terms of tissue distribution, widely expressed at low level. Expressed in oocytes from primordial to antral follicles. Also detected in somatic cells of the ovary, namely, in granulosa cells from the pre-antral follicle stage onward.

It is found in the nucleus. It localises to the chromosome. The protein localises to the nucleus speckle. In terms of biological role, may play a role in pre-mRNA splicing as component of the spliceosome. Acts as an important regulator of the cell cycle that participates in the maintenance of genome integrity. During cell cycle progression in embryonic fibroblast, prevents replication fork collapse, double-strand break formation and cell cycle checkpoint activation. Controls mitotic cell cycle progression and cell survival in rapidly proliferating intestinal epithelium and embryonic stem cells. During the embryo preimplantation, controls different aspects of M phase. During early oocyte growth, plays a role in oocyte survival by preventing chromosomal breaks formation, activation of TP63 and reduction of transcription. This is Zinc finger protein 830 from Mus musculus (Mouse).